The primary structure comprises 118 residues: MSIKYSNKINKIRTFALSLVFIGLFIAYLGVFFRENIIIMTTFMMVGFLAVIASTVVYFWIGMLSTKTIQIICPSCDKPTKMLGRVDACMHCNQPLTLDRDLEGKEFDEKYNKKSYKS.

2 helical membrane passes run Ile-12 to Phe-32 and Phe-43 to Met-63.

It belongs to the UPF0295 family.

Its subcellular location is the cell membrane. The protein is UPF0295 protein BC_0520 of Bacillus cereus (strain ATCC 14579 / DSM 31 / CCUG 7414 / JCM 2152 / NBRC 15305 / NCIMB 9373 / NCTC 2599 / NRRL B-3711).